Consider the following 274-residue polypeptide: Tryptophan synthase alpha chain (274 aa).

Active-site proton acceptor residues include E49 and D60.

The protein belongs to the TrpA family. In terms of assembly, tetramer of two alpha and two beta chains.

The enzyme catalyses (1S,2R)-1-C-(indol-3-yl)glycerol 3-phosphate + L-serine = D-glyceraldehyde 3-phosphate + L-tryptophan + H2O. Its pathway is amino-acid biosynthesis; L-tryptophan biosynthesis; L-tryptophan from chorismate: step 5/5. Its function is as follows. The alpha subunit is responsible for the aldol cleavage of indoleglycerol phosphate to indole and glyceraldehyde 3-phosphate. This chain is Tryptophan synthase alpha chain, found in Gluconacetobacter diazotrophicus (strain ATCC 49037 / DSM 5601 / CCUG 37298 / CIP 103539 / LMG 7603 / PAl5).